The sequence spans 503 residues: Proton-coupled zinc antiporter SLC30A1 (503 aa).

The Cytoplasmic segment spans residues 1–10; the sequence is MGCWGRNRGR. A helical membrane pass occupies residues 11 to 31; sequence LLCMLLLTFMFMVLEVVVSRV. At 32–35 the chain is on the extracellular side; it reads TASL. A helical transmembrane segment spans residues 36–56; the sequence is AMLSDSFHMLSDVLALVVALV. Zn(2+) is bound by residues histidine 43 and aspartate 47. At 57-78 the chain is on the cytoplasmic side; the sequence is AERFARRTHATQKNTFGWIRAE. Residues 79 to 99 form a helical membrane-spanning segment; the sequence is VMGALVNAIFLTGLCFAILLE. The Extracellular segment spans residues 100-113; sequence AVERFIEPHEMQQP. Residues 114–134 traverse the membrane as a helical segment; the sequence is LVVLSVGVAGLLVNVLGLCLF. The Cytoplasmic portion of the chain corresponds to 135–243; it reads HHHSGEGQGA…RAGQLNMRGV (109 aa). The tract at residues 140–213 is disordered; that stretch reads EGQGAGHGHS…PEKLRSDDPV (74 aa). The 6 X 2 AA approximate repeats of H-G stretch occupies residues 145–156; that stretch reads GHGHSHGHGHGH. Basic residues predominate over residues 147-165; the sequence is GHSHGHGHGHLAKGARKAG. Positions 184–196 are enriched in polar residues; sequence TNTLVANTSNSNG. Residues 200-211 show a composition bias toward basic and acidic residues; the sequence is DQAEPEKLRSDD. Residues 244–264 form a helical membrane-spanning segment; sequence FLHVLGDALGSVIVVVNALVF. Histidine 246 and aspartate 250 together coordinate Zn(2+). The Extracellular portion of the chain corresponds to 265–303; sequence YFNWKGCTEDDFCTNPCFPDPCKSSVEIINSTQAPMRDA. Asparagine 294 carries N-linked (GlcNAc...) asparagine glycosylation. A helical transmembrane segment spans residues 304–324; the sequence is GPCWVLYLDPTLCIIMVCILL. Topologically, residues 325-503 are cytoplasmic; that stretch reads YTTYPLLKES…VPNKQPESSL (179 aa). Serine 502 carries the post-translational modification Phosphoserine.

Belongs to the cation diffusion facilitator (CDF) transporter (TC 2.A.4) family. SLC30A subfamily. In terms of assembly, homodimer. Interacts with TMEM163. Interacts and forms a complex with TMC6 and TMC8; the interaction regulates zinc transport into the ER. Widely expressed.

Its subcellular location is the cell membrane. It localises to the basolateral cell membrane. It is found in the cytoplasmic vesicle membrane. The protein localises to the cytoplasm. The protein resides in the endoplasmic reticulum membrane. Its subcellular location is the golgi apparatus membrane. It localises to the nucleus membrane. The catalysed reaction is Zn(2+)(in) + 2 H(+)(out) = Zn(2+)(out) + 2 H(+)(in). Functionally, zinc ion:proton antiporter that could function at the plasma membrane mediating zinc efflux from cells against its electrochemical gradient protecting them from intracellular zinc accumulation and toxicity. Alternatively, could prevent the transport to the plasma membrane of CACNB2, the L-type calcium channels regulatory subunit, through a yet to be defined mechanism. By modulating the expression of these channels at the plasma membrane, could prevent calcium and zinc influx into cells. By the same mechanism, could also prevent L-type calcium channels-mediated heavy metal influx into cells. In some cells, could also function as a zinc ion:proton antiporter mediating zinc entry into the lumen of cytoplasmic vesicles. In macrophages, can increase zinc ions concentration into the lumen of cytoplasmic vesicles containing engulfed bacteria and could help inactivate them. Forms a complex with TMC6/EVER1 and TMC8/EVER2 at the ER membrane of keratynocytes which facilitates zinc uptake into the ER. Down-regulates the activity of transcription factors induced by zinc and cytokines. The polypeptide is Proton-coupled zinc antiporter SLC30A1 (Mus musculus (Mouse)).